A 421-amino-acid polypeptide reads, in one-letter code: Protein PHLOEM UNLOADING MODULATOR (421 aa).

7 helical membrane-spanning segments follow: residues Leu-30–Lys-50, Ile-60–Val-80, His-124–Phe-144, Tyr-158–Leu-178, Ala-286–Ala-306, Cys-323–Ala-343, and Thr-397–Leu-417.

Belongs to the sphingomyelin synthase family.

It is found in the membrane. It functions in the pathway sphingolipid metabolism. Its function is as follows. Catalyzes the biosynthesis of sphingolipids with very long-chain fatty acid (VLCFA). Required for the formation of plasmodesmal cytoplasmic sleeve during the transition from type I to type II plasmodesmata to modulate post-sieve elements (SE) unloading and symplastic cell-to-cell molecular trafficking at the phloem pole pericycle (PPP)-endodermis interface in roots. The protein is Protein PHLOEM UNLOADING MODULATOR of Arabidopsis thaliana (Mouse-ear cress).